The sequence spans 100 residues: Urease subunit gamma (100 aa).

Belongs to the urease gamma subunit family. Heterotrimer of UreA (gamma), UreB (beta) and UreC (alpha) subunits. Three heterotrimers associate to form the active enzyme.

The protein resides in the cytoplasm. The enzyme catalyses urea + 2 H2O + H(+) = hydrogencarbonate + 2 NH4(+). The protein operates within nitrogen metabolism; urea degradation; CO(2) and NH(3) from urea (urease route): step 1/1. The chain is Urease subunit gamma from Azoarcus sp. (strain BH72).